A 443-amino-acid chain; its full sequence is D-inositol 3-phosphate glycosyltransferase (443 aa).

His26 contacts 1D-myo-inositol 3-phosphate. UDP-N-acetyl-alpha-D-glucosamine is bound by residues 32–33 and Gly40; that span reads QP. 1D-myo-inositol 3-phosphate-binding positions include 37-42, Lys95, Tyr128, Thr152, and Arg172; that span reads DAGGMN. UDP-N-acetyl-alpha-D-glucosamine contacts are provided by Arg246, Lys251, and Gln304. The Mg(2+) site is built by Tyr313, Arg314, and Ala316. UDP-N-acetyl-alpha-D-glucosamine-binding residues include Glu326 and Glu334. Thr340 lines the Mg(2+) pocket.

Belongs to the glycosyltransferase group 1 family. MshA subfamily. As to quaternary structure, homodimer.

The catalysed reaction is 1D-myo-inositol 3-phosphate + UDP-N-acetyl-alpha-D-glucosamine = 1D-myo-inositol 2-acetamido-2-deoxy-alpha-D-glucopyranoside 3-phosphate + UDP + H(+). Its function is as follows. Catalyzes the transfer of a N-acetyl-glucosamine moiety to 1D-myo-inositol 3-phosphate to produce 1D-myo-inositol 2-acetamido-2-deoxy-glucopyranoside 3-phosphate in the mycothiol biosynthesis pathway. This Mycobacteroides abscessus (strain ATCC 19977 / DSM 44196 / CCUG 20993 / CIP 104536 / JCM 13569 / NCTC 13031 / TMC 1543 / L948) (Mycobacterium abscessus) protein is D-inositol 3-phosphate glycosyltransferase.